The chain runs to 62 residues: Large ribosomal subunit protein uL15 (62 aa).

Belongs to the universal ribosomal protein uL15 family.

In Candida albicans (Yeast), this protein is Large ribosomal subunit protein uL15 (RPL28).